Reading from the N-terminus, the 142-residue chain is ATP synthase epsilon chain (142 aa).

Belongs to the ATPase epsilon chain family. F-type ATPases have 2 components, CF(1) - the catalytic core - and CF(0) - the membrane proton channel. CF(1) has five subunits: alpha(3), beta(3), gamma(1), delta(1), epsilon(1). CF(0) has three main subunits: a, b and c.

The protein resides in the cell inner membrane. Its function is as follows. Produces ATP from ADP in the presence of a proton gradient across the membrane. The sequence is that of ATP synthase epsilon chain from Shewanella frigidimarina (strain NCIMB 400).